We begin with the raw amino-acid sequence, 161 residues long: ATP synthase subunit b (161 aa).

Residues 10–29 (AVVQLLNFLFLLWILNKLLY) form a helical membrane-spanning segment.

Belongs to the ATPase B chain family. In terms of assembly, F-type ATPases have 2 components, F(1) - the catalytic core - and F(0) - the membrane proton channel. F(1) has five subunits: alpha(3), beta(3), gamma(1), delta(1), epsilon(1). F(0) has three main subunits: a(1), b(2) and c(10-14). The alpha and beta chains form an alternating ring which encloses part of the gamma chain. F(1) is attached to F(0) by a central stalk formed by the gamma and epsilon chains, while a peripheral stalk is formed by the delta and b chains.

It is found in the cell inner membrane. Its function is as follows. F(1)F(0) ATP synthase produces ATP from ADP in the presence of a proton or sodium gradient. F-type ATPases consist of two structural domains, F(1) containing the extramembraneous catalytic core and F(0) containing the membrane proton channel, linked together by a central stalk and a peripheral stalk. During catalysis, ATP synthesis in the catalytic domain of F(1) is coupled via a rotary mechanism of the central stalk subunits to proton translocation. In terms of biological role, component of the F(0) channel, it forms part of the peripheral stalk, linking F(1) to F(0). The protein is ATP synthase subunit b of Fervidobacterium nodosum (strain ATCC 35602 / DSM 5306 / Rt17-B1).